Consider the following 423-residue polypeptide: Histidine--tRNA ligase (423 aa).

Belongs to the class-II aminoacyl-tRNA synthetase family. In terms of assembly, homodimer.

It is found in the cytoplasm. The catalysed reaction is tRNA(His) + L-histidine + ATP = L-histidyl-tRNA(His) + AMP + diphosphate + H(+). The polypeptide is Histidine--tRNA ligase (Prochlorococcus marinus (strain MIT 9211)).